Consider the following 434-residue polypeptide: Histidinol dehydrogenase (434 aa).

NAD(+) is bound by residues Tyr-130, Gln-191, and Asn-214. Positions 237, 259, and 262 each coordinate substrate. Gln-259 and His-262 together coordinate Zn(2+). Active-site proton acceptor residues include Glu-327 and His-328. Substrate contacts are provided by His-328, Asp-361, Glu-415, and His-420. Asp-361 serves as a coordination point for Zn(2+). His-420 contributes to the Zn(2+) binding site.

The protein belongs to the histidinol dehydrogenase family. It depends on Zn(2+) as a cofactor.

It catalyses the reaction L-histidinol + 2 NAD(+) + H2O = L-histidine + 2 NADH + 3 H(+). It functions in the pathway amino-acid biosynthesis; L-histidine biosynthesis; L-histidine from 5-phospho-alpha-D-ribose 1-diphosphate: step 9/9. In terms of biological role, catalyzes the sequential NAD-dependent oxidations of L-histidinol to L-histidinaldehyde and then to L-histidine. This is Histidinol dehydrogenase from Chromobacterium violaceum (strain ATCC 12472 / DSM 30191 / JCM 1249 / CCUG 213 / NBRC 12614 / NCIMB 9131 / NCTC 9757 / MK).